Here is a 100-residue protein sequence, read N- to C-terminus: Large ribosomal subunit protein uL23 (100 aa).

Belongs to the universal ribosomal protein uL23 family. As to quaternary structure, part of the 50S ribosomal subunit. Contacts protein L29, and trigger factor when it is bound to the ribosome.

Its function is as follows. One of the early assembly proteins it binds 23S rRNA. One of the proteins that surrounds the polypeptide exit tunnel on the outside of the ribosome. Forms the main docking site for trigger factor binding to the ribosome. This Photobacterium profundum (strain SS9) protein is Large ribosomal subunit protein uL23.